Reading from the N-terminus, the 398-residue chain is Tryptophan synthase beta chain (398 aa).

Lys88 carries the N6-(pyridoxal phosphate)lysine modification.

This sequence belongs to the TrpB family. In terms of assembly, tetramer of two alpha and two beta chains. It depends on pyridoxal 5'-phosphate as a cofactor.

The enzyme catalyses (1S,2R)-1-C-(indol-3-yl)glycerol 3-phosphate + L-serine = D-glyceraldehyde 3-phosphate + L-tryptophan + H2O. It participates in amino-acid biosynthesis; L-tryptophan biosynthesis; L-tryptophan from chorismate: step 5/5. In terms of biological role, the beta subunit is responsible for the synthesis of L-tryptophan from indole and L-serine. The chain is Tryptophan synthase beta chain from Actinobacillus succinogenes (strain ATCC 55618 / DSM 22257 / CCUG 43843 / 130Z).